Consider the following 87-residue polypeptide: Small ribosomal subunit protein bS18 (87 aa).

Basic and acidic residues predominate over residues 1 to 20 (MAGKSSGDRRKPIRKGKDGK). A disordered region spans residues 1 to 24 (MAGKSSGDRRKPIRKGKDGKNAAP).

Belongs to the bacterial ribosomal protein bS18 family. Part of the 30S ribosomal subunit. Forms a tight heterodimer with protein bS6.

Functionally, binds as a heterodimer with protein bS6 to the central domain of the 16S rRNA, where it helps stabilize the platform of the 30S subunit. This chain is Small ribosomal subunit protein bS18, found in Leifsonia xyli subsp. xyli (strain CTCB07).